Consider the following 1528-residue polypeptide: DNA topoisomerase 2-alpha (1528 aa).

The residue at position 1 (M1) is an N-acetylmethionine. S4 carries the phosphoserine modification. K17 participates in a covalent cross-link: Glycyl lysine isopeptide (Lys-Gly) (interchain with G-Cter in SUMO2). ATP-binding positions include N90, N119, and 147 to 149 (SSN). Glycyl lysine isopeptide (Lys-Gly) (interchain with G-Cter in SUMO2) cross-links involve residues K155 and K156. 160–167 (GRNGYGAK) serves as a coordination point for ATP. T281 is modified (phosphothreonine). Residues 341 to 343 (KKK) are interaction with DNA. K351 is covalently cross-linked (Glycyl lysine isopeptide (Lys-Gly) (interchain with G-Cter in SUMO2)). ATP is bound at residue 375–377 (QTK). Residues K385, K396, K415, K417, K424, and K439 each participate in a glycyl lysine isopeptide (Lys-Gly) (interchain with G-Cter in SUMO2) cross-link. The Toprim domain occupies 454–571 (CTLILTEGDS…SLLRHRFLEE (118 aa)). Residue E460 participates in Mg(2+) binding. Residues K465, K479, and K528 each participate in a glycyl lysine isopeptide (Lys-Gly) (interchain with G-Cter in SUMO2) cross-link. Positions 540 and 542 each coordinate Mg(2+). Residues K583, K598, K613, K621, K624, K631, K638, K654, K661, and K675 each participate in a glycyl lysine isopeptide (Lys-Gly) (interchain with G-Cter in SUMO2) cross-link. In terms of domain architecture, Topo IIA-type catalytic spans 714-1168 (IPSMVDGLKP…SPSDLWKEDL (455 aa)). Y804 serves as the catalytic O-(5'-phospho-DNA)-tyrosine intermediate. Positions 989–998 (KLQSSLTCNS) are interaction with DNA. Residue K1074 forms a Glycyl lysine isopeptide (Lys-Gly) (interchain with G-Cter in SUMO2) linkage. Disordered regions lie at residues 1090–1118 (KEAQ…AAEA) and 1183–1211 (KQDE…VLPS). Residues 1098–1107 (DEEENEESDT) show a composition bias toward acidic residues. Position 1105 is a phosphoserine; by CK1 (S1105). Low complexity predominate over residues 1108 to 1118 (ETSTSDSAAEA). Glycyl lysine isopeptide (Lys-Gly) (interchain with G-Cter in SUMO2) cross-links involve residues K1193 and K1201. The residue at position 1211 (S1211) is a Phosphoserine. Residue K1226 forms a Glycyl lysine isopeptide (Lys-Gly) (interchain with G-Cter in SUMO2) linkage. A disordered region spans residues 1229-1528 (AEKKIRKKIK…EESDDDDDLF (300 aa)). K1238 is covalently cross-linked (Glycyl lysine isopeptide (Lys-Gly) (interchain with G-Cter in SUMO1); alternate). K1238 is covalently cross-linked (Glycyl lysine isopeptide (Lys-Gly) (interchain with G-Cter in SUMO2); alternate). Residue T1245 is modified to Phosphothreonine. Positions 1258-1270 (QRIEKKQKKEPGA) are enriched in basic and acidic residues. Glycyl lysine isopeptide (Lys-Gly) (interchain with G-Cter in SUMO2) cross-links involve residues K1272, K1279, and K1282. 4 positions are modified to phosphoserine: S1291, S1293, S1295, and S1298. The segment covering 1296-1306 (DVSSNESNVDV) has biased composition (low complexity). The residue at position 1323 (T1323) is a Phosphothreonine. Residues 1326 to 1345 (LDSDEDFSGLDEKDEDEDFL) are compositionally biased toward acidic residues. S1328 and S1333 each carry phosphoserine. T1350 is subject to Phosphothreonine. Residues K1359 and K1363 each participate in a glycyl lysine isopeptide (Lys-Gly) (interchain with G-Cter in SUMO2) cross-link. Residues S1370 and S1373 each carry the phosphoserine modification. K1382 participates in a covalent cross-link: Glycyl lysine isopeptide (Lys-Gly) (interchain with G-Cter in SUMO2). S1384 and S1388 each carry phosphoserine. K1418 is covalently cross-linked (Glycyl lysine isopeptide (Lys-Gly) (interchain with G-Cter in SUMO2); alternate). At K1418 the chain carries N6-acetyllysine; alternate. An interaction with PLSCR1 region spans residues 1429–1435 (KKRAAPK). K1438 is covalently cross-linked (Glycyl lysine isopeptide (Lys-Gly) (interchain with G-Cter in SUMO2); alternate). Residue K1438 is modified to N6-acetyllysine; alternate. Glycyl lysine isopeptide (Lys-Gly) (interchain with G-Cter in SUMO2) cross-links involve residues K1450 and K1455. Phosphoserine is present on residues S1465, S1467, S1470, and S1472. Glycyl lysine isopeptide (Lys-Gly) (interchain with G-Cter in SUMO2) cross-links involve residues K1480 and K1488. Over residues 1506-1519 (AKSDRARKPIKYLE) the composition is skewed to basic and acidic residues. The residue at position 1521 (S1521) is a Phosphoserine.

Belongs to the type II topoisomerase family. As to quaternary structure, homodimer. Interacts with COPS5. Interacts with RECQL5; this stimulates DNA decatenation. Interacts with SETMAR; stimulates the topoisomerase activity. Interacts with DHX9; this interaction occurs in a E2 enzyme UBE2I- and RNA-dependent manner, negatively regulates DHX9-mediated double-stranded DNA and RNA duplex helicase activity and stimulates TOP2A-mediated supercoiled DNA relaxation activity. Interacts with HNRNPU (via C-terminus); this interaction protects the topoisomerase TOP2A from degradation and positively regulates the relaxation of supercoiled DNA in a RNA-dependent manner. Interacts with MCM3AP. Interacts with ERCC6. Interacts with PLSCR1. Interacts with GCNA; this interaction allows the resolution of topoisomerase II (TOP2A) DNA-protein cross-links. Interacts with POL1RA/RPA1 (via dock II) and UBTF in the context of Pol I complex; may assist Pol I transcription initiation by releasing supercoils occurring during DNA unwinding. Interacts with TPRN; TPRN interacts with a number of DNA damage response proteins, is recruited to sites of DNA damage and may play a role in DNA damage repair. The cofactor is Mg(2+). It depends on Mn(2+) as a cofactor. Ca(2+) serves as cofactor. Phosphorylation has no effect on catalytic activity. However, phosphorylation at Ser-1105 by CSNK1D/CK1 promotes DNA cleavable complex formation.

Its subcellular location is the cytoplasm. It localises to the nucleus. The protein localises to the nucleoplasm. The protein resides in the nucleolus. The catalysed reaction is ATP-dependent breakage, passage and rejoining of double-stranded DNA.. Functionally, key decatenating enzyme that alters DNA topology by binding to two double-stranded DNA molecules, generating a double-stranded break in one of the strands, passing the intact strand through the broken strand, and religating the broken strand. May play a role in regulating the period length of BMAL1 transcriptional oscillation. This is DNA topoisomerase 2-alpha (Top2a) from Mus musculus (Mouse).